The sequence spans 189 residues: MDKHGVKTPLWRKEVEDPEAREEDLEDDSSSSSSSSSVEERSDPESATETEEDSRDAEEREARSVSYSPLRQESSSQQVALLRRSDSSFWGWLSPFALLGGLAAPADRKRGAPEEPCVLETRRRPPRRGGCARCEILFCKKCKTLHSHPAYVEHCILEHPDLGKAEATGNSELIDSQPPSPQCSKLFYL.

The segment covering 1-15 has biased composition (basic and acidic residues); it reads MDKHGVKTPLWRKEV. Residues 1–77 are disordered; the sequence is MDKHGVKTPL…SPLRQESSSQ (77 aa). 2 stretches are compositionally biased toward acidic residues: residues 16 to 29 and 46 to 56; these read EDPEAREEDLEDDS and SATETEEDSRD. Positions 65 to 77 are enriched in polar residues; it reads VSYSPLRQESSSQ.

This is an uncharacterized protein from Mus musculus (Mouse).